Reading from the N-terminus, the 400-residue chain is MGFITKAIPLALAAMSVVNGAEILETRAGVQTLADKYIVIMNDGVTEKAFDSHRSWVNRTHRRRLVRRGAKAMGGMKHTYKFPTGMKGYSGHFDEDMINQIAKHSDVKYIERDARVQINAITEQDNVPSWGLARVGSREAGGSTYYYDSTAGEGSTAYIIDTGTDIEHEEFEGRATWGSNFVDDMDMDCNGHGTHVSGTVGGATFGVAKKSNIVAVKVLDCNGSGSNSGVIMGMEWATNDAKKKGADKAVANMSLGGAFSQASNDAAAAIANGGVFLAVAAGNDNVDAANSSPASEPSICTVAASTEQDGKADFSNFGQVVDVYAPGDSITSAKPGGGSQVLSGTSMATPHVAGLAAYFIGLGMPGGPGLCDTIKQKAIDAIANPGAGTTGKLINNGSGK.

A signal peptide spans 1–20 (MGFITKAIPLALAAMSVVNG). A propeptide spanning residues 21–119 (AEILETRAGV…IERDARVQIN (99 aa)) is cleaved from the precursor. The 83-residue stretch at 36–118 (KYIVIMNDGV…YIERDARVQI (83 aa)) folds into the Inhibitor I9 domain. The Peptidase S8 domain maps to 129 to 400 (SWGLARVGSR…GKLINNGSGK (272 aa)). Catalysis depends on charge relay system residues aspartate 161 and histidine 192. N-linked (GlcNAc...) asparagine glycans are attached at residues asparagine 222 and asparagine 252. Serine 346 serves as the catalytic Charge relay system. Residue asparagine 396 is glycosylated (N-linked (GlcNAc...) asparagine).

This sequence belongs to the peptidase S8 family.

The protein localises to the secreted. Its function is as follows. Secreted subtilisin-like serine protease with keratinolytic activity that contributes to pathogenicity. This Arthroderma otae (strain ATCC MYA-4605 / CBS 113480) (Microsporum canis) protein is Subtilisin-like protease 7 (SUB7).